The following is a 520-amino-acid chain: Type I restriction enzyme EcoR124I/EcoR124II methylase subunit (520 aa).

The interval 10–190 (AELHRQIWQI…YEFLISNYAA (181 aa)) is N-terminal domain. S-adenosyl-L-methionine-binding positions include 198-203 (EFFTPQ), 230-232 (SGS), and E254. The segment at 198-473 (EFFTPQHVSK…NDYNLSVSSY (276 aa)) is catalytic domain. The segment at 481–510 (EIIDIAELNAELKTTVSKIDQLRKDIDAIV) is C-terminal tail.

It belongs to the N(4)/N(6)-methyltransferase family. As to quaternary structure, the type I restriction/modification system is composed of three polypeptides R, M and S; the restriction enzyme has stoichiometry R(2)M(2)S(1) while the methyltransferase is M(2)S(1). There is an equilibrium between R(2)M(2)S(1) and R(1)M(2)S(1); the latter is methylation and translocation proficient but restriction deficient. In terms of assembly, (Microbial infection) Holoenenzyme interacts with Escherichia phage T7 protein Ocr; this interaction leads to the inhibition of the restriction activity, but may still allow methylation and translocation.

It catalyses the reaction a 2'-deoxyadenosine in DNA + S-adenosyl-L-methionine = an N(6)-methyl-2'-deoxyadenosine in DNA + S-adenosyl-L-homocysteine + H(+). Its function is as follows. The subtype gamma methyltransferase (M) subunit of a type I restriction enzyme. The M and S subunits together form a methyltransferase (MTase) that methylates A-3 on the top and bottom strand of the sequence 5'-GAAN(6)RTCG-3' (for EcoR124I) and 5'-GAAN(7)RTCG-3' (for EcoR124II). In the presence of the R subunit the complex can also act as an endonuclease, binding to the same target sequence but cutting the DNA some distance from this site. Whether the DNA is cut or modified depends on the methylation state of the target sequence. When the target site is unmodified, the DNA is cut. When the target site is hemimethylated, the complex acts as a maintenance MTase modifying the DNA so that both strands become methylated. After locating a non-methylated recognition site, the enzyme complex serves as a molecular motor that translocates DNA in an ATP-dependent manner until a collision occurs that triggers cleavage. The R(1)M(2)S(1) complex translocates an average of 555 bp/second on nicked DNA; the R(2)M(2)S(1) complex translocates at double that speed. The 2 R subunit motors are independent and track along the helical pitch of the DNA, inducing positive supercoiling ahead of themselves. The protein is Type I restriction enzyme EcoR124I/EcoR124II methylase subunit (hsdM) of Escherichia coli.